The sequence spans 277 residues: Large ribosomal subunit protein uL2 (277 aa).

Disordered regions lie at residues 37–60 (KNST…GHKH) and 223–265 (VVMN…KRTD). The segment covering 39 to 49 (STAGRNNNGHI) has biased composition (polar residues). Basic residues predominate over residues 50-60 (TTRHKGGGHKH). The segment covering 229–244 (DHPHGGGEGRTGEARE) has biased composition (basic and acidic residues).

It belongs to the universal ribosomal protein uL2 family. Part of the 50S ribosomal subunit. Forms a bridge to the 30S subunit in the 70S ribosome.

One of the primary rRNA binding proteins. Required for association of the 30S and 50S subunits to form the 70S ribosome, for tRNA binding and peptide bond formation. It has been suggested to have peptidyltransferase activity; this is somewhat controversial. Makes several contacts with the 16S rRNA in the 70S ribosome. This is Large ribosomal subunit protein uL2 from Neisseria meningitidis serogroup A / serotype 4A (strain DSM 15465 / Z2491).